A 184-amino-acid chain; its full sequence is Putative lyase MJ0807 (184 aa).

It belongs to the chorismate pyruvate-lyase type 2 family.

In Methanocaldococcus jannaschii (strain ATCC 43067 / DSM 2661 / JAL-1 / JCM 10045 / NBRC 100440) (Methanococcus jannaschii), this protein is Putative lyase MJ0807.